The primary structure comprises 344 residues: S-methyl-5'-thioadenosine phosphorylase (344 aa).

Residues T45, 88 to 89, and 121 to 122 contribute to the phosphate site; these read RH and SA. A substrate-binding site is contributed by M238. Phosphate is bound at residue S239. Substrate is bound at residue 262–264; sequence DYD.

This sequence belongs to the PNP/MTAP phosphorylase family. MTAP subfamily. In terms of assembly, homotrimer.

The protein localises to the cytoplasm. Its subcellular location is the nucleus. The enzyme catalyses S-methyl-5'-thioadenosine + phosphate = 5-(methylsulfanyl)-alpha-D-ribose 1-phosphate + adenine. It functions in the pathway amino-acid biosynthesis; L-methionine biosynthesis via salvage pathway; S-methyl-5-thio-alpha-D-ribose 1-phosphate from S-methyl-5'-thioadenosine (phosphorylase route): step 1/1. Catalyzes the reversible phosphorylation of S-methyl-5'-thioadenosine (MTA) to adenine and 5-methylthioribose-1-phosphate. Involved in the breakdown of MTA, a major by-product of polyamine biosynthesis. Responsible for the first step in the methionine salvage pathway after MTA has been generated from S-adenosylmethionine. Has broad substrate specificity with 6-aminopurine nucleosides as preferred substrates. This chain is S-methyl-5'-thioadenosine phosphorylase, found in Candida albicans (strain SC5314 / ATCC MYA-2876) (Yeast).